We begin with the raw amino-acid sequence, 489 residues long: Ketol-acid reductoisomerase (NADP(+)) (489 aa).

Positions 16-207 constitute a KARI N-terminal Rossmann domain; that stretch reads LRKCKLVEKN…GSHRAGVLHS (192 aa). NADP(+) contacts are provided by residues 44-47, arginine 67, serine 77, and 107-109; these read CGSQ and DKQ. Histidine 131 is a catalytic residue. Residue glycine 157 participates in NADP(+) binding. KARI C-terminal knotted domains lie at 208 to 343 and 344 to 483; these read SFIA…KCKI and CHKE…MVDM. Mg(2+)-binding residues include aspartate 216, glutamate 220, glutamate 388, and glutamate 392. Position 413 (serine 413) interacts with substrate.

Belongs to the ketol-acid reductoisomerase family. The cofactor is Mg(2+).

It catalyses the reaction (2R)-2,3-dihydroxy-3-methylbutanoate + NADP(+) = (2S)-2-acetolactate + NADPH + H(+). The enzyme catalyses (2R,3R)-2,3-dihydroxy-3-methylpentanoate + NADP(+) = (S)-2-ethyl-2-hydroxy-3-oxobutanoate + NADPH + H(+). It functions in the pathway amino-acid biosynthesis; L-isoleucine biosynthesis; L-isoleucine from 2-oxobutanoate: step 2/4. Its pathway is amino-acid biosynthesis; L-valine biosynthesis; L-valine from pyruvate: step 2/4. Involved in the biosynthesis of branched-chain amino acids (BCAA). Catalyzes an alkyl-migration followed by a ketol-acid reduction of (S)-2-acetolactate (S2AL) to yield (R)-2,3-dihydroxy-isovalerate. In the isomerase reaction, S2AL is rearranged via a Mg-dependent methyl migration to produce 3-hydroxy-3-methyl-2-ketobutyrate (HMKB). In the reductase reaction, this 2-ketoacid undergoes a metal-dependent reduction by NADPH to yield (R)-2,3-dihydroxy-isovalerate. In Buchnera aphidicola subsp. Schlechtendalia chinensis, this protein is Ketol-acid reductoisomerase (NADP(+)).